Reading from the N-terminus, the 264-residue chain is 3-methyl-2-oxobutanoate hydroxymethyltransferase (264 aa).

The Mg(2+) site is built by aspartate 45 and aspartate 84. 3-methyl-2-oxobutanoate contacts are provided by residues 45–46 (DS), aspartate 84, and lysine 112. Glutamate 114 is a Mg(2+) binding site. The Proton acceptor role is filled by glutamate 181.

This sequence belongs to the PanB family. As to quaternary structure, homodecamer; pentamer of dimers. The cofactor is Mg(2+).

It localises to the cytoplasm. The enzyme catalyses 3-methyl-2-oxobutanoate + (6R)-5,10-methylene-5,6,7,8-tetrahydrofolate + H2O = 2-dehydropantoate + (6S)-5,6,7,8-tetrahydrofolate. Its pathway is cofactor biosynthesis; (R)-pantothenate biosynthesis; (R)-pantoate from 3-methyl-2-oxobutanoate: step 1/2. Functionally, catalyzes the reversible reaction in which hydroxymethyl group from 5,10-methylenetetrahydrofolate is transferred onto alpha-ketoisovalerate to form ketopantoate. The protein is 3-methyl-2-oxobutanoate hydroxymethyltransferase of Aeromonas hydrophila subsp. hydrophila (strain ATCC 7966 / DSM 30187 / BCRC 13018 / CCUG 14551 / JCM 1027 / KCTC 2358 / NCIMB 9240 / NCTC 8049).